The chain runs to 437 residues: Amino-acid acetyltransferase (437 aa).

Positions 289 to 437 (ECIRLATSFD…SKVLMLALDN (149 aa)) constitute an N-acetyltransferase domain.

Belongs to the acetyltransferase family. ArgA subfamily.

The protein localises to the cytoplasm. It carries out the reaction L-glutamate + acetyl-CoA = N-acetyl-L-glutamate + CoA + H(+). Its pathway is amino-acid biosynthesis; L-arginine biosynthesis; N(2)-acetyl-L-ornithine from L-glutamate: step 1/4. This chain is Amino-acid acetyltransferase, found in Haemophilus ducreyi (strain 35000HP / ATCC 700724).